Consider the following 353-residue polypeptide: Methionine import ATP-binding protein MetN (353 aa).

An ABC transporter domain is found at 8–249 (LDQIDVTFHQ…PKQPLTQDFI (242 aa)). Residue 42–49 (GYSGAGKS) participates in ATP binding.

Belongs to the ABC transporter superfamily. Methionine importer (TC 3.A.1.24) family. As to quaternary structure, the complex is composed of two ATP-binding proteins (MetN), two transmembrane proteins (MetI) and a solute-binding protein (MetQ).

The protein localises to the cell membrane. It carries out the reaction L-methionine(out) + ATP + H2O = L-methionine(in) + ADP + phosphate + H(+). The enzyme catalyses D-methionine(out) + ATP + H2O = D-methionine(in) + ADP + phosphate + H(+). Functionally, part of the ABC transporter complex MetNIQ involved in methionine import. Responsible for energy coupling to the transport system. The chain is Methionine import ATP-binding protein MetN from Streptococcus pneumoniae (strain ATCC BAA-255 / R6).